Consider the following 752-residue polypeptide: Catalase-peroxidase 1 (752 aa).

The segment at 1–45 (MPPNTPDASDARPPQADTETHSHSESENPVIESPKPKAHAPLTNQ) is disordered. Residues 116-244 (WHAAGTYRIF…YGATTMGLIY (129 aa)) constitute a cross-link (tryptophyl-tyrosyl-methioninium (Trp-Tyr) (with M-270)). His-117 acts as the Proton acceptor in catalysis. The segment at residues 244–270 (YVNPEGPEGKPDPLAAAHDIRETFGRM) is a cross-link (tryptophyl-tyrosyl-methioninium (Tyr-Met) (with W-116)). His-285 contacts heme b.

This sequence belongs to the peroxidase family. Peroxidase/catalase subfamily. As to quaternary structure, homodimer or homotetramer. Requires heme b as cofactor. Formation of the three residue Trp-Tyr-Met cross-link is important for the catalase, but not the peroxidase activity of the enzyme.

It catalyses the reaction H2O2 + AH2 = A + 2 H2O. It carries out the reaction 2 H2O2 = O2 + 2 H2O. In terms of biological role, bifunctional enzyme with both catalase and broad-spectrum peroxidase activity. May play a role in the intracellular survival of mycobacteria. In Mycolicibacterium fortuitum (Mycobacterium fortuitum), this protein is Catalase-peroxidase 1.